The sequence spans 94 residues: Co-chaperonin GroES (94 aa).

It belongs to the GroES chaperonin family. In terms of assembly, heptamer of 7 subunits arranged in a ring. Interacts with the chaperonin GroEL.

It localises to the cytoplasm. Together with the chaperonin GroEL, plays an essential role in assisting protein folding. The GroEL-GroES system forms a nano-cage that allows encapsulation of the non-native substrate proteins and provides a physical environment optimized to promote and accelerate protein folding. GroES binds to the apical surface of the GroEL ring, thereby capping the opening of the GroEL channel. The sequence is that of Co-chaperonin GroES from Thermoanaerobacter pseudethanolicus (strain ATCC 33223 / 39E) (Clostridium thermohydrosulfuricum).